We begin with the raw amino-acid sequence, 473 residues long: Aspartyl/glutamyl-tRNA(Asn/Gln) amidotransferase subunit B (473 aa).

It belongs to the GatB/GatE family. GatB subfamily. In terms of assembly, heterotrimer of A, B and C subunits.

The enzyme catalyses L-glutamyl-tRNA(Gln) + L-glutamine + ATP + H2O = L-glutaminyl-tRNA(Gln) + L-glutamate + ADP + phosphate + H(+). The catalysed reaction is L-aspartyl-tRNA(Asn) + L-glutamine + ATP + H2O = L-asparaginyl-tRNA(Asn) + L-glutamate + ADP + phosphate + 2 H(+). In terms of biological role, allows the formation of correctly charged Asn-tRNA(Asn) or Gln-tRNA(Gln) through the transamidation of misacylated Asp-tRNA(Asn) or Glu-tRNA(Gln) in organisms which lack either or both of asparaginyl-tRNA or glutaminyl-tRNA synthetases. The reaction takes place in the presence of glutamine and ATP through an activated phospho-Asp-tRNA(Asn) or phospho-Glu-tRNA(Gln). The sequence is that of Aspartyl/glutamyl-tRNA(Asn/Gln) amidotransferase subunit B from Sulfurisphaera tokodaii (strain DSM 16993 / JCM 10545 / NBRC 100140 / 7) (Sulfolobus tokodaii).